The primary structure comprises 806 residues: MSGWPRIYYKLLNLPLSILVKSKSIPAEPAQELGLDTSRPIMYVLPYNSKADLLTLRAQCLAHDLPDPLEPLEIDGALLPRYVFIHGGPRVFTYYTPKEESVKLFHDYLDLHRSNPALDVQMVPVSVMFGRAPGREKGEDNPPLRMLNGVQKFFAISWLGRDSFVRFSPSVSLRRMADEHGTDKIIAQKLARVARMHFARQRLAAVGPRLPARQDLFNKLLASKAIARAVEDEARSKKISHEKAQQNAIALMEEIAANFSYEMIRLTDRILGFTWNRLYQGINVHNAERVRQLAHDGHEIVYVPCHRSHMDYLLLSYVLYHQGLVPPHIAAGINLNFWPAGPIFRRLGAFFIRRTFKGNKLYSTVFREYLGELFSRGYSVEYFVEGGRSRTGRLLDPKTGTLSMTIQAMLRGGTRPITLVPIYIGYEHVMEVGTYAKELRGATKEKESLPQMLKGLSKLRNLGQGYVNFGEPMPLMTYLNQHVPEWRESIDPIEAIRPAWLTPTVNSIAADLMVRINNAGAANAMNLCCTALLASRQRSLTREQLTEQLDCYLDLMRNVPYSTDSTVPAASAGELIAHALQMNKFEVEKDTIGDIIILPREQAVLMTYYRNNIAHMLIMPSLMAAIITQHRRISRDALQQHVEALYPMLKAELFLRWEREELASVIDALASEMQRQGLITLQDDELHINPTHSRTLQLLAAGARETLQRYAITFWLLSANPSINRSTLEKESRTVAQRLSVLHGINAPEFFDKAVFSSLVLTLRDEGYISDTGDAEPAETMKIYQMLADLITSDVRLTIESATQGE.

Residues 305 to 310 (CHRSHM) carry the HXXXXD motif motif.

Belongs to the GPAT/DAPAT family.

It is found in the cell inner membrane. The catalysed reaction is sn-glycerol 3-phosphate + an acyl-CoA = a 1-acyl-sn-glycero-3-phosphate + CoA. Its pathway is phospholipid metabolism; CDP-diacylglycerol biosynthesis; CDP-diacylglycerol from sn-glycerol 3-phosphate: step 1/3. The chain is Glycerol-3-phosphate acyltransferase from Salmonella agona (strain SL483).